Reading from the N-terminus, the 232-residue chain is 5'-methylthioadenosine/S-adenosylhomocysteine nucleosidase (232 aa).

Residue Glu-12 is the Proton acceptor of the active site. Residues Gly-78, Ile-152, and 173 to 174 (ME) each bind substrate. The active-site Proton donor is the Asp-197.

The protein belongs to the PNP/UDP phosphorylase family. MtnN subfamily. Homodimer.

The catalysed reaction is S-adenosyl-L-homocysteine + H2O = S-(5-deoxy-D-ribos-5-yl)-L-homocysteine + adenine. It catalyses the reaction S-methyl-5'-thioadenosine + H2O = 5-(methylsulfanyl)-D-ribose + adenine. It carries out the reaction 5'-deoxyadenosine + H2O = 5-deoxy-D-ribose + adenine. The protein operates within amino-acid biosynthesis; L-methionine biosynthesis via salvage pathway; S-methyl-5-thio-alpha-D-ribose 1-phosphate from S-methyl-5'-thioadenosine (hydrolase route): step 1/2. Functionally, catalyzes the irreversible cleavage of the glycosidic bond in both 5'-methylthioadenosine (MTA) and S-adenosylhomocysteine (SAH/AdoHcy) to adenine and the corresponding thioribose, 5'-methylthioribose and S-ribosylhomocysteine, respectively. Also cleaves 5'-deoxyadenosine, a toxic by-product of radical S-adenosylmethionine (SAM) enzymes, into 5-deoxyribose and adenine. Thus, is required for in vivo function of the radical SAM enzymes biotin synthase and lipoic acid synthase, that are inhibited by 5'-deoxyadenosine accumulation. In Salmonella arizonae (strain ATCC BAA-731 / CDC346-86 / RSK2980), this protein is 5'-methylthioadenosine/S-adenosylhomocysteine nucleosidase.